The sequence spans 78 residues: uncharacterized protein (78 aa).

This is an uncharacterized protein from Helicobacter pylori (strain J99 / ATCC 700824) (Campylobacter pylori J99).